The chain runs to 534 residues: Glucans biosynthesis protein D (534 aa).

The tat-type signal signal peptide spans 1 to 30; the sequence is MRMQRRHLLKNAAAALAALGLPALPQWALA.

Belongs to the OpgD/OpgG family. In terms of processing, predicted to be exported by the Tat system. The position of the signal peptide cleavage has not been experimentally proven.

The protein localises to the periplasm. It functions in the pathway glycan metabolism; osmoregulated periplasmic glucan (OPG) biosynthesis. In terms of biological role, probably involved in the control of the structural glucose backbone of osmoregulated periplasmic glucans (OPGs). This Xanthomonas oryzae pv. oryzae (strain PXO99A) protein is Glucans biosynthesis protein D.